The primary structure comprises 408 residues: LL-diaminopimelate aminotransferase (408 aa).

Residues tyrosine 15 and glycine 42 each contribute to the substrate site. Pyridoxal 5'-phosphate is bound by residues tyrosine 72, 108-109 (SK), tyrosine 132, asparagine 187, tyrosine 218, and 246-248 (SFS). Residues lysine 109, tyrosine 132, and asparagine 187 each coordinate substrate. An N6-(pyridoxal phosphate)lysine modification is found at lysine 249. Residues arginine 257 and asparagine 292 each contribute to the pyridoxal 5'-phosphate site. Asparagine 292 and arginine 388 together coordinate substrate.

Belongs to the class-I pyridoxal-phosphate-dependent aminotransferase family. LL-diaminopimelate aminotransferase subfamily. Homodimer. Pyridoxal 5'-phosphate is required as a cofactor.

The catalysed reaction is (2S,6S)-2,6-diaminopimelate + 2-oxoglutarate = (S)-2,3,4,5-tetrahydrodipicolinate + L-glutamate + H2O + H(+). It functions in the pathway amino-acid biosynthesis; L-lysine biosynthesis via DAP pathway; LL-2,6-diaminopimelate from (S)-tetrahydrodipicolinate (aminotransferase route): step 1/1. Involved in the synthesis of meso-diaminopimelate (m-DAP or DL-DAP), required for both lysine and peptidoglycan biosynthesis. Catalyzes the direct conversion of tetrahydrodipicolinate to LL-diaminopimelate. This Prochlorococcus marinus (strain SARG / CCMP1375 / SS120) protein is LL-diaminopimelate aminotransferase.